The following is a 195-amino-acid chain: Transcriptional regulator LdrP (195 aa).

Residues 110 to 182 enclose the HTH crp-type domain; the sequence is GELRARIARY…YRRVYLLDLA (73 aa). Residues 142–161 constitute a DNA-binding region (H-T-H motif); that stretch reads HEEIADATASIRESVSKVLA.

Homodimer.

In terms of biological role, activates transcription. Positively regulates PcrtB promoter upstream of the crtB operon in a cAMP-independent manner. Regulated genes include genes encoding DNA photolyase, phytoene synthase and cytochrome P450 monooxygenase, which are involved in carotenoid biosynthesis. Positively regulates the light-inducible gene cluster in the megaplasmid in a cAMP-independent manner. The protein is Transcriptional regulator LdrP of Thermus thermophilus (strain ATCC 27634 / DSM 579 / HB8).